A 427-amino-acid polypeptide reads, in one-letter code: Indole diterpene prenyltransferase penD (427 aa).

77 to 78 is a binding site for L-tryptophan; sequence YV. Substrate contacts are provided by R99, K186, Y188, R259, K261, Y263, Y344, Y409, and Y413.

Belongs to the tryptophan dimethylallyltransferase family.

The protein operates within secondary metabolite biosynthesis. Its function is as follows. Indole diterpene prenyltransferase; part of the gene cluster that mediates the biosynthesis of the indole diterpenes penitrems. The geranylgeranyl diphosphate (GGPP) synthase penG catalyzes the first step in penitrem biosynthesis via conversion of farnesyl pyrophosphate and isopentyl pyrophosphate into geranylgeranyl pyrophosphate (GGPP). Condensation of indole-3-glycerol phosphate with GGPP by the prenyl transferase penC then forms 3-geranylgeranylindole (3-GGI). Epoxidation by the FAD-dependent monooxygenase penM leads to a epoxidized-GGI that is substrate of the terpene cyclase penB for cyclization to yield paspaline. Paspaline is subsequently converted to 13-desoxypaxilline by the cytochrome P450 monooxygenase penP, the latter being then converted to paxilline by the cytochrome P450 monooxygenase penQ. Paxilline is converted to beta-paxitriol via C-10 ketoreduction by the short-chain dehydrogenase PC-15 which can be monoprenylated at the C-20 by the indole diterpene prenyltransferase penD. A two-step elimination (acetylation and elimination) process performed by the O-acetyltransferase PC-16 and the P.simplicissimum ptmI-ortholog not yet identified in P.crustosum, leads to the production of the prenylated form of penijanthine. The FAD-linked oxidoreductase ptmO then converts the prenylated form of penijanthine into PC-M5 which is in turn transformed into PC-M4 by the aromatic dimethylallyltransferase PC-22. A series of oxidation steps involving 4 cytochrome P450 monooxygenases (PC-21, PC-05, PC-23, PC-20) and a FAD-dependent monooxygenase (PC-14) are required for the transformation of PC-M4 to penitrems A and E. Synthesis of these final products is proposed to proceed via penitrems D and C (PC-21, PC-05, PC-14) and penitrems B and F (PC-21, PC-05, PC-14, PC-23). This chain is Indole diterpene prenyltransferase penD, found in Penicillium crustosum (Blue mold fungus).